A 582-amino-acid polypeptide reads, in one-letter code: External alternative NAD(P)H-ubiquinone oxidoreductase B2, mitochondrial (582 aa).

A mitochondrion-targeting transit peptide spans 1-38 (MRNFSVFERFSKAFKDHPSLTRILVVSTISGGGLIAYS). 60–90 (KVVLLGTGWAGTSFLKNLNNSQYEVQIISPR) contributes to the FAD binding site. 223 to 259 (LHFVVVGGGPTGVEFAAELHDFVTEDLVSLYPRAKGS) is an NAD(+) binding site. An EF-hand domain is found at 379 to 414 (KVMEDVSAIFSKADKDKSGTLTLKEFQEAMDDICVR). Ca(2+)-binding residues include aspartate 392, aspartate 394, serine 396, threonine 398, and glutamate 403. The short motif at 573 to 582 (FIFGRDSSSI) is the Microbody targeting signal element.

Belongs to the NADH dehydrogenase family. Requires FAD as cofactor. In terms of tissue distribution, mostly expressed in seedlings and roots and, to a lower extent, in cotyledons, leaves, stems, buds and flowers.

Its subcellular location is the mitochondrion inner membrane. The protein resides in the peroxisome. The enzyme catalyses a quinone + NADH + H(+) = a quinol + NAD(+). The catalysed reaction is a ubiquinone + NADH + H(+) = a ubiquinol + NAD(+). With respect to regulation, NADPH oxidase activity is stimulated by calcium ions. Its function is as follows. Alternative NADH-ubiquinone oxidoreductase which catalyzes the oxidation of mitochondrial NADH does not translocate protons across the inner mitochondrial membrane. Calcium-dependent NAD(P)H dehydrogenase; more efficient on NADH. Binds calcium ions. The polypeptide is External alternative NAD(P)H-ubiquinone oxidoreductase B2, mitochondrial (NDB2) (Arabidopsis thaliana (Mouse-ear cress)).